Consider the following 322-residue polypeptide: UPF0324 membrane protein BB4178 (322 aa).

The next 10 membrane-spanning stretches (helical) occupy residues 13–35 (FIRQFGFSPLVVGIVCGMLYGNF), 50–69 (FTARRLLRIAVAFYGLNISI), 76–98 (GLPGLAVSVGVVASTLLIGTVAG), 108–127 (TAMLTAAGSAICGAAAVLAF), 139–161 (AVAVATVVLFGTLSMFLYPVIYH), 171–193 (ALGIYIGGTVHEVAQVVGAASNI), 209–231 (VALLVPVLLVLGFWLRASAAAGA), 241–260 (VPWFAIGFLVLAIVNSLDIL), 273–292 (VFVLTMAMTALGIETRFAQI), and 296–318 (GPRVMALGLVLYAWLVFGGYGIV).

This sequence belongs to the UPF0324 family.

It localises to the cell membrane. The polypeptide is UPF0324 membrane protein BB4178 (Bordetella bronchiseptica (strain ATCC BAA-588 / NCTC 13252 / RB50) (Alcaligenes bronchisepticus)).